We begin with the raw amino-acid sequence, 73 residues long: Large ribosomal subunit protein bL28 (73 aa).

Belongs to the bacterial ribosomal protein bL28 family.

The protein is Large ribosomal subunit protein bL28 of Fervidobacterium nodosum (strain ATCC 35602 / DSM 5306 / Rt17-B1).